The primary structure comprises 176 residues: Ribosome maturation factor RimM (176 aa).

One can recognise a PRC barrel domain in the interval 93 to 166 (EGEYYHADLI…RVVIELPAEI (74 aa)).

The protein belongs to the RimM family. Binds ribosomal protein uS19.

The protein resides in the cytoplasm. Its function is as follows. An accessory protein needed during the final step in the assembly of 30S ribosomal subunit, possibly for assembly of the head region. Essential for efficient processing of 16S rRNA. May be needed both before and after RbfA during the maturation of 16S rRNA. It has affinity for free ribosomal 30S subunits but not for 70S ribosomes. The polypeptide is Ribosome maturation factor RimM (Rhodopseudomonas palustris (strain BisB18)).